The chain runs to 697 residues: Methionine--tRNA ligase (697 aa).

The 'HIGH' region motif lies at 11-21 (PYANGPIHLGH). Residues Cys-142, Cys-145, Cys-155, and Cys-158 each contribute to the Zn(2+) site. Positions 343–347 (KMSKS) match the 'KMSKS' region motif. Lys-346 serves as a coordination point for ATP. The tRNA-binding domain occupies 595-697 (DFMKVEMTVA…DECKVGDKLA (103 aa)).

It belongs to the class-I aminoacyl-tRNA synthetase family. MetG type 1 subfamily. As to quaternary structure, homodimer. Requires Zn(2+) as cofactor.

It localises to the cytoplasm. The enzyme catalyses tRNA(Met) + L-methionine + ATP = L-methionyl-tRNA(Met) + AMP + diphosphate. Its function is as follows. Is required not only for elongation of protein synthesis but also for the initiation of all mRNA translation through initiator tRNA(fMet) aminoacylation. This chain is Methionine--tRNA ligase, found in Psychrobacter sp. (strain PRwf-1).